Consider the following 503-residue polypeptide: E3 ubiquitin-protein ligase ariadne-1 (503 aa).

A compositionally biased stretch (acidic residues) spans 1–11 (MDSDNDNDFCD). The segment at 1–40 (MDSDNDNDFCDNVDSGNVSSGDDGDDDFGMEVDLPSSADR) is disordered. The span at 12–21 (NVDSGNVSSG) shows a compositional bias: low complexity. Residues 129–340 (QCEECEICFS…SSWYNCNRYD (212 aa)) are TRIAD supradomain. Positions 133, 136, 150, 152, 155, 158, 178, 183, 223, 228, 244, 246, 251, 254, 259, 264, 291, and 294 each coordinate Zn(2+). Residues 133–183 (CEICFSQLPPDSMAGLECGHRFCMPCWHEYLSTKIVAEGLGQTISCAAHGC) form an RING-type 1 zinc finger. Residues 133–201 (CEICFSQLPP…VANLVTDARV (69 aa)) are important for interaction with Ubc10. An IBR-type zinc finger spans residues 203–264 (VKYQQLITNS…GENWHDPVKC (62 aa)). The RING-type 2; atypical zinc-finger motif lies at 291–322 (CPRCSVTIEKDGGCNHMVCKNQNCKNEFCWVC). Cys-304 is a catalytic residue. The Zn(2+) site is built by Cys-309, Cys-314, Cys-319, Cys-322, His-329, and Cys-336. Positions 341–361 (EDEAKTARDAQEKLRSSLARY) form a coiled coil.

This sequence belongs to the RBR family. Ariadne subfamily. Can form homodimers. Interacts (via RING-type 1 zinc finger) with Ubc10. Interacts with the LINC complex member koi. Interacts with park. Interacts with ari-2. Specifically interacts with isoform ECR-A of EcR. In terms of processing, autophosphorylated. As to expression, widely expressed, with prominent levels in the nervous system and female gonads.

It is found in the cytoplasm. The protein localises to the nucleus. The catalysed reaction is [E2 ubiquitin-conjugating enzyme]-S-ubiquitinyl-L-cysteine + [acceptor protein]-L-lysine = [E2 ubiquitin-conjugating enzyme]-L-cysteine + [acceptor protein]-N(6)-ubiquitinyl-L-lysine.. Functionally, atypical E3 ubiquitin-protein ligase, which catalyzes ubiquitination of target proteins together with ubiquitin-conjugating enzyme E2 Ubc10. Controls the subcellular localization and morphology of muscle nuclei (myonuclei) by regulating the protein levels and distribution of the LINC (LInker of Nucleoskeleton and Cytoskeleton) complex. Functions by mediating the monoubiquitination of the LINC complex subunit koi leading to its subsequent proteasomal degradation. Appears to function, at least partially redundantly, with the RBR E3 ligase family member park in nuclear localization and morphology. Likely to function in metamorphosis by regulating the proteins levels of EcR isoform A (ECR-A) and its heterodimeric partner usp, via the ubiquitination and subsequent degradation of ECR-A. The protein is E3 ubiquitin-protein ligase ariadne-1 of Drosophila melanogaster (Fruit fly).